Reading from the N-terminus, the 337-residue chain is UDP-glucose 4-epimerase (337 aa).

Residues 11-12, 31-36, 58-59, 80-84, Asn-99, Ser-124, Tyr-149, Lys-153, and Phe-178 contribute to the NAD(+) site; these read YI, DNLSNA, DL, and FAGLK. Residues Ser-124 and Tyr-149 each coordinate substrate. Tyr-149 functions as the Proton acceptor in the catalytic mechanism. Substrate is bound by residues Asn-179, 199-200, 216-218, Arg-231, and 292-295; these read NL, GIF, and RDGD.

The protein belongs to the NAD(P)-dependent epimerase/dehydratase family. Homodimer. NAD(+) is required as a cofactor.

The catalysed reaction is UDP-alpha-D-glucose = UDP-alpha-D-galactose. Its pathway is carbohydrate metabolism; galactose metabolism. Involved in the metabolism of galactose. Catalyzes the conversion of UDP-galactose (UDP-Gal) to UDP-glucose (UDP-Glc) through a mechanism involving the transient reduction of NAD. The polypeptide is UDP-glucose 4-epimerase (galE) (Erwinia amylovora (Fire blight bacteria)).